The primary structure comprises 81 residues: Small ribosomal subunit protein eS21 (81 aa).

This sequence belongs to the eukaryotic ribosomal protein eS21 family.

The chain is Small ribosomal subunit protein eS21 (RPS21) from Zea mays (Maize).